Consider the following 374-residue polypeptide: Tetraacyldisaccharide 4'-kinase (374 aa).

ATP is bound at residue 59–66; that stretch reads TAGGTGKT.

It belongs to the LpxK family.

The enzyme catalyses a lipid A disaccharide + ATP = a lipid IVA + ADP + H(+). It functions in the pathway glycolipid biosynthesis; lipid IV(A) biosynthesis; lipid IV(A) from (3R)-3-hydroxytetradecanoyl-[acyl-carrier-protein] and UDP-N-acetyl-alpha-D-glucosamine: step 6/6. Functionally, transfers the gamma-phosphate of ATP to the 4'-position of a tetraacyldisaccharide 1-phosphate intermediate (termed DS-1-P) to form tetraacyldisaccharide 1,4'-bis-phosphate (lipid IVA). This Elusimicrobium minutum (strain Pei191) protein is Tetraacyldisaccharide 4'-kinase.